The following is a 474-amino-acid chain: MAAAPIQQNGTHTGVPIDLDPPDSRKRPLEAPPEAGSTKRTNTGEDGQYFLKVLIPSYAAGSIIGKGGQTIVQLQKETGATIKLSKSKDFYPGTTERVCLIQGTIEALNAVHGFIAEKIREMPQNVAKTEPVSILQPQTTVNPDRIKQVKIIVPNSTAGLIIGKGGATVKAIMEQSGAWVQLSQKPDGINLQERVVTVSGEPEQNRKAVELIIQKIQEDPQSGSCLNISYANVTGPVANSNPTGFPYANTAEVLPTAAAAAGLLGHANLAGVAAFPAVLSGFTGNDLVAITSALNTLASYGYNLNTLGLGLSQAAATGALAAAAASANPAAAAANLLATYASEASASGSTAGGTAGTFALGSLAAATAATNGYFGAASPLAASAILGTEKSTDGSKDVVEIAVPENLVGAILGKGGKTLVEYQELTGARIQISKKGEFVPGTRNRKVTITGTPAATQAAQYLITQRITYEQGVR.

Residues 1-12 (MAAAPIQQNGTH) show a composition bias toward polar residues. A disordered region spans residues 1 to 43 (MAAAPIQQNGTHTGVPIDLDPPDSRKRPLEAPPEAGSTKRTNT). The short motif at 26 to 42 (KRPLEAPPEAGSTKRTN) is the Bipartite nuclear localization signal element. 3 KH domains span residues 48–115 (QYFL…HGFI), 146–212 (IKQV…VELI), and 396–463 (KDVV…QYLI). Residues 394 to 474 (GSKDVVEIAV…QRITYEQGVR (81 aa)) form a required for RNA binding region.

As to quaternary structure, interacts with PTBP2; the interaction is direct.

It localises to the nucleus. Functions to regulate alternative splicing in neurons by binding pre-mRNA in a sequence-specific manner to activate exon inclusion or exclusion. It binds specifically to the sequences 5'-YCAY-3' and regulates splicing in only a subset of regulated exons. Binding to an exonic 5'-YCAY-3' cluster changes the protein complexes assembled on pre-mRNA, blocking U1 snRNP binding and exon inclusion, whereas binding to an intronic 5'-YCAY-3' cluster enhances spliceosome assembly and exon inclusion. Binding to 5'-YCAY-3' clusters results in a local and asymmetric action to regulate spliceosome assembly and alternative splicing in neurons. Binding to an exonic 5'-YCAY-3' cluster changed the protein complexes assembled on pre-mRNA, blocking U1 snRNP (small nuclear ribonucleoprotein) binding and exon inclusion, whereas binding to an intronic 5'-YCAY-3' cluster enhanced spliceosome assembly and exon inclusion. With NOVA1, they perform unique biological functions in different brain areas and cell types. Autoregulates its own expression by acting as a splicing repressor. Acts to activate the inclusion of exon E3A in the glycine receptor alpha-2 chain and of exon E9 in gamma-aminobutyric-acid receptor gamma-2 subunit via a distal downstream UCAU-rich intronic splicing enhancer. Acts to regulate a novel glycine receptor alpha-2 chain splice variant (alpha-2N) in developing spinal cord. This Rattus norvegicus (Rat) protein is RNA-binding protein Nova-1.